Consider the following 293-residue polypeptide: uncharacterized protein (293 aa).

Basic residues predominate over residues 1–10 (MHMQLRKRKR). The tract at residues 1–28 (MHMQLRKRKRVDYSGRNQTSDPPSTTTA) is disordered. Residues 15–28 (GRNQTSDPPSTTTA) are compositionally biased toward polar residues.

The protein resides in the nucleus. This is an uncharacterized protein from Saccharomyces cerevisiae (strain ATCC 204508 / S288c) (Baker's yeast).